A 297-amino-acid chain; its full sequence is 4-hydroxy-tetrahydrodipicolinate synthase (297 aa).

A pyruvate-binding site is contributed by Thr-49. Tyr-137 functions as the Proton donor/acceptor in the catalytic mechanism. Lys-166 functions as the Schiff-base intermediate with substrate in the catalytic mechanism. Pyruvate is bound at residue Ile-208.

The protein belongs to the DapA family. As to quaternary structure, homotetramer; dimer of dimers.

It is found in the cytoplasm. It carries out the reaction L-aspartate 4-semialdehyde + pyruvate = (2S,4S)-4-hydroxy-2,3,4,5-tetrahydrodipicolinate + H2O + H(+). The protein operates within amino-acid biosynthesis; L-lysine biosynthesis via DAP pathway; (S)-tetrahydrodipicolinate from L-aspartate: step 3/4. Catalyzes the condensation of (S)-aspartate-beta-semialdehyde [(S)-ASA] and pyruvate to 4-hydroxy-tetrahydrodipicolinate (HTPA). This chain is 4-hydroxy-tetrahydrodipicolinate synthase, found in Porphyromonas gingivalis (strain ATCC 33277 / DSM 20709 / CIP 103683 / JCM 12257 / NCTC 11834 / 2561).